The sequence spans 649 residues: MKTFIKERGLAFFLIAVVLLWIKTYVGYVLNFNLGIDNTIQKILLFVNPLSSSLFFLGFGLLFKKKLQQTAIIVIHFLMSFLLYANIVYYRFFNDFITIPVIMQAKTNGGQLGDSAFSLMRPTDAFYFIDTIILIILAIKVNKPAETSSKKSFRIIFASSILVFLINLAVAESDRPELLTRSFDRNYLVKYLGTYNFTIYDAVQNIKSNSQRALADSSDVTEVENYMKANYDVPNNVYFGKAEGKNVIYVSLESLQSFIIDYKIDGKEVTPFLNKLAHDNETFYFDNFFHQTGQGKTSDAEFMMENSLYPLAQGSVFVNKAQNTLQSVPAILKSKNYTSATFHGNTQTFWNRNEMYKAEGIDKFFDSAYYDMNEENTKNYGMKDKPFFKESMPLLESLPQPFYTKFITLSNHFPFGMDEGDTDFPAGDFGDSVVDNYFQSAHYLDQSIEQFFNDLKKDGLYDKSIIVMYGDHYGISENHNKAMAKVLGKDEITDYDNAQLQRVPLFIHAAGVKGEKVHKYAGDVDVAPTILHLLGVDTKDYLMSGSDILSKEHREVIPFRNGDFISPKYTKISGKYYDTKTGKELDESEVDKSEDSLVKKELEMSDKIINGDLLRFYEPKGFKKVNPSDYDYTKHDEDSSETSKDNEDK.

The Cytoplasmic portion of the chain corresponds to 1–9 (MKTFIKERG). Residues 10 to 30 (LAFFLIAVVLLWIKTYVGYVL) form a helical membrane-spanning segment. The Extracellular segment spans residues 31-42 (NFNLGIDNTIQK). The helical transmembrane segment at 43–63 (ILLFVNPLSSSLFFLGFGLLF) threads the bilayer. The Cytoplasmic segment spans residues 64–69 (KKKLQQ). Residues 70-90 (TAIIVIHFLMSFLLYANIVYY) form a helical membrane-spanning segment. Residues 91–118 (RFFNDFITIPVIMQAKTNGGQLGDSAFS) are Extracellular-facing. The helical transmembrane segment at 119 to 139 (LMRPTDAFYFIDTIILIILAI) threads the bilayer. Residues 140 to 151 (KVNKPAETSSKK) lie on the Cytoplasmic side of the membrane. Residues 152 to 172 (SFRIIFASSILVFLINLAVAE) traverse the membrane as a helical segment. Residues 173–649 (SDRPELLTRS…SETSKDNEDK (477 aa)) are Extracellular-facing. Residues E253 and T297 each coordinate Mn(2+). T297 is a catalytic residue. H412 is a substrate binding site. Mn(2+)-binding residues include D471 and H472. The tract at residues 622-649 (FKKVNPSDYDYTKHDEDSSETSKDNEDK) is disordered. The segment covering 631–649 (DYTKHDEDSSETSKDNEDK) has biased composition (basic and acidic residues).

The protein belongs to the LTA synthase family. Proteolytically cleaved.

Its subcellular location is the cell membrane. It localises to the secreted. It participates in cell wall biogenesis; lipoteichoic acid biosynthesis. In terms of biological role, catalyzes the polymerization of lipoteichoic acid (LTA) polyglycerol phosphate, a reaction that presumably uses phosphatidylglycerol (PG) as substrate. This is Lipoteichoic acid synthase 2 (ltaS2) from Bacillus subtilis (strain 168).